A 112-amino-acid chain; its full sequence is K(+)/H(+) antiporter modulator KhtS (112 aa).

The segment at 42–64 is disordered; sequence YVPMSSYPQETQSAKTPSPGSMH. Residues 47–60 are compositionally biased toward polar residues; sequence SYPQETQSAKTPSP.

The protein localises to the cell membrane. Functionally, modulates the activity of the potassium/proton antiporter KhtU. Involved in protection of the cell from methylglyoxal, a toxic by-product of glycolysis. The chain is K(+)/H(+) antiporter modulator KhtS from Bacillus subtilis (strain 168).